Here is a 277-residue protein sequence, read N- to C-terminus: Zinc finger protein 511 (277 aa).

3 consecutive C2H2-type zinc fingers follow at residues 96-121, 123-146, and 160-185; these read FRCHIAGCKQLFDTLEGYEHHYNALH, NVCSNCKRSFPSNRLLEIHILEWH, and YECLVEGCGLKFKTSKERKDHLIRTH. The disordered stretch occupies residues 225-244; it reads ESSESMDFSLTPEPVETEPM.

It belongs to the krueppel C2H2-type zinc-finger protein family.

It localises to the nucleus. Functionally, may be involved in transcriptional regulation. The sequence is that of Zinc finger protein 511 (znf511) from Danio rerio (Zebrafish).